A 332-amino-acid chain; its full sequence is Formamidase (332 aa).

Residues 14 to 259 enclose the CN hydrolase domain; it reads FLAALIQYPV…WEIVTAEVYP (246 aa). The active-site Proton acceptor is the Glu60. Lys132 (proton donor) is an active-site residue. Residue Cys165 is the Nucleophile of the active site.

This sequence belongs to the carbon-nitrogen hydrolase superfamily. Aliphatic amidase family.

It catalyses the reaction formamide + H2O = formate + NH4(+). In terms of biological role, is an aliphatic amidase with a restricted substrate specificity, as it only hydrolyzes formamide. This chain is Formamidase, found in Bacillus cereus (strain Q1).